The sequence spans 425 residues: NAC transcription factor ONAC010 (425 aa).

Positions 1-10 (MESPDSSSGS) are enriched in polar residues. Residues 1-34 (MESPDSSSGSAPPRVLRRQQQQPGSAPELPPGFR) form a disordered region. Positions 12 to 23 (PPRVLRRQQQQP) are enriched in low complexity. The 172-residue stretch at 29–200 (LPPGFRFHPT…DWVLCRIYKK (172 aa)) folds into the NAC domain. The DNA-binding element occupies 129-206 (VGVKKALVFY…IYKKTNKAGA (78 aa)).

It is found in the nucleus. Its function is as follows. Transcription factor of the NAC family associated with male fertility. This is NAC transcription factor ONAC010 (ONAC010) from Oryza sativa subsp. indica (Rice).